Consider the following 155-residue polypeptide: DNA gyrase inhibitor (155 aa).

Belongs to the DNA gyrase inhibitor family. Interacts with DNA gyrase.

The protein resides in the cytoplasm. Its function is as follows. Inhibits the supercoiling activity of DNA gyrase. Acts by inhibiting DNA gyrase at an early step, prior to (or at the step of) binding of DNA by the gyrase. It protects cells against toxins that target DNA gyrase, by inhibiting activity of these toxins and reducing the formation of lethal double-strand breaks in the cell. This is DNA gyrase inhibitor from Salmonella typhi.